Consider the following 296-residue polypeptide: Cytidine deaminase (296 aa).

CMP/dCMP-type deaminase domains follow at residues 48-168 and 187-296; these read DVDA…FGPV and QNVN…FIEE. Substrate is bound at residue 89–91; sequence NME. Histidine 102 lines the Zn(2+) pocket. Glutamate 104 functions as the Proton donor in the catalytic mechanism. Residues cysteine 129 and cysteine 132 each coordinate Zn(2+).

This sequence belongs to the cytidine and deoxycytidylate deaminase family. Homodimer. Zn(2+) is required as a cofactor.

The catalysed reaction is cytidine + H2O + H(+) = uridine + NH4(+). The enzyme catalyses 2'-deoxycytidine + H2O + H(+) = 2'-deoxyuridine + NH4(+). Functionally, this enzyme scavenges exogenous and endogenous cytidine and 2'-deoxycytidine for UMP synthesis. The sequence is that of Cytidine deaminase from Pectobacterium atrosepticum (strain SCRI 1043 / ATCC BAA-672) (Erwinia carotovora subsp. atroseptica).